Consider the following 213-residue polypeptide: ATP synthase peripheral stalk subunit OSCP, mitochondrial (213 aa).

A mitochondrion-targeting transit peptide spans 1-23 (MAAPATSVLSRQVRSFSTSVVRP). The SIFI-degron signature appears at 5-23 (ATSVLSRQVRSFSTSVVRP). N6-acetyllysine occurs at positions 60, 70, and 73. K90 is modified (N6-succinyllysine). 2 positions are modified to N6-acetyllysine; alternate: K100 and K158. An N6-succinyllysine; alternate mark is found at K100 and K158. K176 and K192 each carry N6-acetyllysine. Residue K199 is modified to N6-succinyllysine.

The protein belongs to the ATPase delta chain family. In terms of assembly, component of the ATP synthase complex composed at least of ATP5F1A/subunit alpha, ATP5F1B/subunit beta, ATP5MC1/subunit c (homooctomer), MT-ATP6/subunit a, MT-ATP8/subunit 8, ATP5ME/subunit e, ATP5MF/subunit f, ATP5MG/subunit g, ATP5MK/subunit k, ATP5MJ/subunit j, ATP5F1C/subunit gamma, ATP5F1D/subunit delta, ATP5F1E/subunit epsilon, ATP5PF/subunit F6, ATP5PB/subunit b, ATP5PD/subunit d, ATP5PO/subunit OSCP. ATP synthase complex consists of a soluble F(1) head domain (subunits alpha(3) and beta(3)) - the catalytic core - and a membrane F(0) domain - the membrane proton channel (subunits c, a, 8, e, f, g, k and j). These two domains are linked by a central stalk (subunits gamma, delta, and epsilon) rotating inside the F1 region and a stationary peripheral stalk (subunits F6, b, d, and OSCP). In response to mitochondrial stress, the precursor protein is ubiquitinated by the SIFI complex in the cytoplasm before mitochondrial import, leading to its degradation. Within the SIFI complex, UBR4 initiates ubiquitin chain that are further elongated or branched by KCMF1. Expressed by the principal cells of the epididymis. Detected in flagella of epididymal sperm (at protein level).

The protein localises to the mitochondrion. It localises to the mitochondrion inner membrane. In terms of biological role, subunit OSCP, of the mitochondrial membrane ATP synthase complex (F(1)F(0) ATP synthase or Complex V) that produces ATP from ADP in the presence of a proton gradient across the membrane which is generated by electron transport complexes of the respiratory chain. ATP synthase complex consist of a soluble F(1) head domain - the catalytic core - and a membrane F(1) domain - the membrane proton channel. These two domains are linked by a central stalk rotating inside the F(1) region and a stationary peripheral stalk. During catalysis, ATP synthesis in the catalytic domain of F(1) is coupled via a rotary mechanism of the central stalk subunits to proton translocation. In vivo, can only synthesize ATP although its ATP hydrolase activity can be activated artificially in vitro. Part of the complex F(0) domain. Part of the complex F(0) domain and the peripheric stalk, which acts as a stator to hold the catalytic alpha(3)beta(3) subcomplex and subunit a/ATP6 static relative to the rotary elements. The protein is ATP synthase peripheral stalk subunit OSCP, mitochondrial of Rattus norvegicus (Rat).